The sequence spans 316 residues: Malate dehydrogenase (316 aa).

NAD(+) is bound by residues 12–17 (GAGNIG) and aspartate 36. Substrate contacts are provided by arginine 85 and arginine 91. NAD(+) is bound by residues asparagine 98 and 121–123 (VTN). Residues asparagine 123 and arginine 154 each coordinate substrate. The active-site Proton acceptor is the histidine 178.

The protein belongs to the LDH/MDH superfamily. MDH type 3 family.

The enzyme catalyses (S)-malate + NAD(+) = oxaloacetate + NADH + H(+). In terms of biological role, catalyzes the reversible oxidation of malate to oxaloacetate. The sequence is that of Malate dehydrogenase from Wolbachia pipientis wMel.